A 294-amino-acid chain; its full sequence is 33 kDa chaperonin (294 aa).

2 disulfide bridges follow: C239–C241 and C272–C275.

The protein belongs to the HSP33 family. In terms of processing, under oxidizing conditions two disulfide bonds are formed involving the reactive cysteines. Under reducing conditions zinc is bound to the reactive cysteines and the protein is inactive.

It is found in the cytoplasm. Redox regulated molecular chaperone. Protects both thermally unfolding and oxidatively damaged proteins from irreversible aggregation. Plays an important role in the bacterial defense system toward oxidative stress. The polypeptide is 33 kDa chaperonin (Listeria welshimeri serovar 6b (strain ATCC 35897 / DSM 20650 / CCUG 15529 / CIP 8149 / NCTC 11857 / SLCC 5334 / V8)).